The sequence spans 46 residues: Photosystem II reaction center protein K (46 aa).

Residues 1 to 9 (MLILFNTFA) constitute a propeptide that is removed on maturation. The helical transmembrane segment at 25–45 (LPLIPLFFFLLVFVWQAAVGF) threads the bilayer.

This sequence belongs to the PsbK family. As to quaternary structure, PSII is composed of 1 copy each of membrane proteins PsbA, PsbB, PsbC, PsbD, PsbE, PsbF, PsbH, PsbI, PsbJ, PsbK, PsbL, PsbM, PsbT, PsbX, PsbY, Psb30/Ycf12, peripheral proteins PsbO, CyanoQ (PsbQ), PsbU, PsbV and a large number of cofactors. It forms dimeric complexes.

It is found in the cellular thylakoid membrane. Its function is as follows. One of the components of the core complex of photosystem II (PSII). PSII is a light-driven water:plastoquinone oxidoreductase that uses light energy to abstract electrons from H(2)O, generating O(2) and a proton gradient subsequently used for ATP formation. It consists of a core antenna complex that captures photons, and an electron transfer chain that converts photonic excitation into a charge separation. This chain is Photosystem II reaction center protein K, found in Prochlorococcus marinus (strain MIT 9301).